We begin with the raw amino-acid sequence, 145 residues long: UPF0102 protein BAV3162 (145 aa).

It belongs to the UPF0102 family.

The chain is UPF0102 protein BAV3162 from Bordetella avium (strain 197N).